Reading from the N-terminus, the 123-residue chain is Large ribosomal subunit protein uL18 (123 aa).

The protein belongs to the universal ribosomal protein uL18 family. In terms of assembly, part of the 50S ribosomal subunit; part of the 5S rRNA/L5/L18/L25 subcomplex. Contacts the 5S and 23S rRNAs.

This is one of the proteins that bind and probably mediate the attachment of the 5S RNA into the large ribosomal subunit, where it forms part of the central protuberance. This is Large ribosomal subunit protein uL18 from Chlamydia caviae (strain ATCC VR-813 / DSM 19441 / 03DC25 / GPIC) (Chlamydophila caviae).